A 188-amino-acid chain; its full sequence is UPF0461 protein C5orf24 homolog (188 aa).

A Phosphoserine modification is found at S37. A Glycyl lysine isopeptide (Lys-Gly) (interchain with G-Cter in SUMO2) cross-link involves residue K75. The interval 79–142 (KKKKNLNRSG…GYKVSPGRPP (64 aa)) is disordered. Residues 80–92 (KKKNLNRSGKRGR) show a composition bias toward basic residues. Residues 94-107 (SGTTKSAGYRTSTG) are compositionally biased toward polar residues. S121 and S180 each carry phosphoserine. Residue K184 forms a Glycyl lysine isopeptide (Lys-Gly) (interchain with G-Cter in SUMO2) linkage.

It belongs to the UPF0461 family.

In Bos taurus (Bovine), this protein is UPF0461 protein C5orf24 homolog.